The sequence spans 455 residues: Phosphoglucosamine mutase (455 aa).

Residue Ser-102 is the Phosphoserine intermediate of the active site. Mg(2+)-binding residues include Ser-102, Asp-241, Asp-243, and Asp-245. A Phosphoserine modification is found at Ser-102.

It belongs to the phosphohexose mutase family. Requires Mg(2+) as cofactor. Activated by phosphorylation.

The enzyme catalyses alpha-D-glucosamine 1-phosphate = D-glucosamine 6-phosphate. Catalyzes the conversion of glucosamine-6-phosphate to glucosamine-1-phosphate. The protein is Phosphoglucosamine mutase of Legionella pneumophila (strain Paris).